Here is a 340-residue protein sequence, read N- to C-terminus: Arginase 1, mitochondrial (340 aa).

Residues 1–24 (MGGVAAGTRWIHHVRRLSAAKVST) constitute a mitochondrion transit peptide. Positions 159, 183, 185, and 187 each coordinate Mn(2+). Substrate is bound by residues 185 to 189 (HPDIY) and 193 to 195 (EGN). Residues D268 and D270 each contribute to the Mn(2+) site. E311 contacts substrate.

This sequence belongs to the arginase family. It depends on Mn(2+) as a cofactor.

The protein resides in the mitochondrion. The enzyme catalyses L-arginine + H2O = urea + L-ornithine. The protein operates within nitrogen metabolism; urea cycle; L-ornithine and urea from L-arginine: step 1/1. Functionally, catalyzes the hydrolysis of L-arginine to urea and L-ornithine. The latter can be utilized in the urea cycle or as a precursor for the synthesis of both polyamines and proline. The sequence is that of Arginase 1, mitochondrial from Oryza sativa subsp. indica (Rice).